Consider the following 436-residue polypeptide: Sulfopropanediol 3-dehydrogenase (436 aa).

Tyrosine 118, glutamine 180, and asparagine 203 together coordinate NAD(+). Zn(2+) contacts are provided by glutamine 248 and histidine 251. Catalysis depends on proton acceptor residues glutamate 318 and histidine 319. Zn(2+)-binding residues include aspartate 352 and histidine 411.

Belongs to the histidinol dehydrogenase family. HpsN subfamily. Zn(2+) serves as cofactor.

The catalysed reaction is (2R)-3-sulfopropanediol + 2 NAD(+) + H2O = (2R)-3-sulfolactate + 2 NADH + 3 H(+). Catalyzes the NAD-dependent oxidation of (R)-2,3-dihydroxypropane-1-sulfonate to (R)-3-sulfolactate. The polypeptide is Sulfopropanediol 3-dehydrogenase (Cupriavidus pinatubonensis (strain JMP 134 / LMG 1197) (Cupriavidus necator (strain JMP 134))).